The following is a 338-amino-acid chain: Ferrochelatase (338 aa).

Fe cation-binding residues include His-189 and Glu-294.

This sequence belongs to the ferrochelatase family.

Its subcellular location is the cytoplasm. The catalysed reaction is heme b + 2 H(+) = protoporphyrin IX + Fe(2+). It participates in porphyrin-containing compound metabolism; protoheme biosynthesis; protoheme from protoporphyrin-IX: step 1/1. Its function is as follows. Catalyzes the ferrous insertion into protoporphyrin IX. The polypeptide is Ferrochelatase (Pseudomonas putida (strain ATCC 700007 / DSM 6899 / JCM 31910 / BCRC 17059 / LMG 24140 / F1)).